A 421-amino-acid chain; its full sequence is MTDLSTPDLPRMSAAIAEPTSHDPDSGGHFGGPSGWGGRYVPEALMAVIEEVTAAYQKERVSQDFLDDLDRLQANYAGRPSPLYEATRLSQHAGSARIFLKREDLNHTGSHKINNVLGQALLARRMGKTRVIAETGAGQHGVATATACALLGLDCVIYMGGIDTARQALNVARMRLLGAEVVAVQTGSKTLKDAINEAFRDWVANADNTYYCFGTAAGPHPFPTMVRDFQRIIGMEARVQIQGQAGRLPDAVVACVGGGSNAIGIFHAFLDDPGVRLVGFEAAGDGVETGRHAATFTAGSPGAFHGSFSYLLQDEDGQTIESHSISAGLDYPGVGPEHAWLKEAGRVDYRPITDSEAMDAFGLLCRMEGIIPAIESAHAVAGALKLGVELGRGAVIVVNLSGRGDKDVETAAKWFGLLGND.

Lys-112 bears the N6-(pyridoxal phosphate)lysine mark.

Belongs to the TrpB family. As to quaternary structure, tetramer of two alpha and two beta chains. The cofactor is pyridoxal 5'-phosphate.

The enzyme catalyses (1S,2R)-1-C-(indol-3-yl)glycerol 3-phosphate + L-serine = D-glyceraldehyde 3-phosphate + L-tryptophan + H2O. It functions in the pathway amino-acid biosynthesis; L-tryptophan biosynthesis; L-tryptophan from chorismate: step 5/5. Its function is as follows. The beta subunit is responsible for the synthesis of L-tryptophan from indole and L-serine. This chain is Tryptophan synthase beta chain (trpB), found in Mycobacterium bovis (strain ATCC BAA-935 / AF2122/97).